Consider the following 234-residue polypeptide: Ubiquinone biosynthesis O-methyltransferase (234 aa).

S-adenosyl-L-methionine-binding residues include arginine 37, glycine 56, aspartate 77, and methionine 121.

The protein belongs to the methyltransferase superfamily. UbiG/COQ3 family.

It carries out the reaction a 3-demethylubiquinol + S-adenosyl-L-methionine = a ubiquinol + S-adenosyl-L-homocysteine + H(+). The enzyme catalyses a 3-(all-trans-polyprenyl)benzene-1,2-diol + S-adenosyl-L-methionine = a 2-methoxy-6-(all-trans-polyprenyl)phenol + S-adenosyl-L-homocysteine + H(+). The protein operates within cofactor biosynthesis; ubiquinone biosynthesis. Its function is as follows. O-methyltransferase that catalyzes the 2 O-methylation steps in the ubiquinone biosynthetic pathway. This Aromatoleum aromaticum (strain DSM 19018 / LMG 30748 / EbN1) (Azoarcus sp. (strain EbN1)) protein is Ubiquinone biosynthesis O-methyltransferase.